A 537-amino-acid chain; its full sequence is Tyrosine-protein kinase Fyn (537 aa).

G2 is lipidated: N-myristoyl glycine. S-palmitoyl cysteine attachment occurs at residues C3 and C6. At T12 the chain carries Phosphothreonine; by PKC. Residues 14-35 (LTEERDGSLNQSSGYRYGTDPT) form a disordered region. S21 and S26 each carry phosphoserine. Positions 82–143 (TGVTLFVALY…PSNYVAPVDS (62 aa)) constitute an SH3 domain. The region spanning 149–246 (WYFGKLGRKD…GLCCRLVVPC (98 aa)) is the SH2 domain. Phosphotyrosine is present on Y185. The Protein kinase domain occupies 271 to 524 (LQLIKRLGNG…YLQSFLEDYF (254 aa)). Residues 277–285 (LGNGQFGEV) and K299 contribute to the ATP site. D390 serves as the catalytic Proton acceptor. A Phosphotyrosine; by autocatalysis modification is found at Y420. Residue Y531 is modified to Phosphotyrosine; by CSK.

This sequence belongs to the protein kinase superfamily. Tyr protein kinase family. SRC subfamily. Interacts (via its SH3 domain) with PIK3R1 and PRMT8. Interacts with FYB1, PAG1, and SH2D1A. Interacts with CD79A (tyrosine-phosphorylated form); the interaction increases FYN activity. Interacts (via SH2 domain) with CSF1R (tyrosine phosphorylated). Interacts with TOM1L1 (phosphorylated form). Interacts with KDR (tyrosine phosphorylated). Interacts (via SH3 domain) with KLHL2 (via N-terminus). Interacts with SH2D1A and SLAMF1. Interacts with ITCH; the interaction phosphorylates ITCH and negatively regulates its activity. Interacts with FASLG. Interacts with RUNX3. Interacts with KIT. Interacts with EPHA8; possible downstream effector of EPHA8 in regulation of cell adhesion. Interacts with PTK2/FAK1; this interaction leads to PTK2/FAK1 phosphorylation and activation. Interacts with CAV1; this interaction couples integrins to the Ras-ERK pathway. Interacts with UNC119. Interacts (via SH2 domain) with PTPRH (phosphorylated form). Interacts with PTPRO (phosphorylated form). Interacts with PTPRB (phosphorylated form). Interacts with FYB2. Interacts with DSCAM. Interacts with SKAP1 and FYB1; this interaction promotes the phosphorylation of CLNK. Interacts with NEDD9; in the presence of PTK2. As to quaternary structure, (Microbial infection) Interacts (via its SH3 domain) with hepatitis E virus/HEV protein ORF3. Mn(2+) serves as cofactor. Post-translationally, autophosphorylated at Tyr-420. Phosphorylation on the C-terminal tail at Tyr-531 by CSK maintains the enzyme in an inactive state. PTPRC/CD45 dephosphorylates Tyr-531 leading to activation. Ultraviolet B (UVB) strongly increase phosphorylation at Thr-12 and kinase activity, and promotes translocation from the cytoplasm to the nucleus. Dephosphorylation at Tyr-420 by PTPN2 negatively regulates T-cell receptor signaling. Phosphorylated at tyrosine residues, which can be enhanced by NTN1. Palmitoylated. Palmitoylation at Cys-3 and Cys-6, probably by ZDHHC21, regulates subcellular location. In terms of tissue distribution, isoform 1 is highly expressed in the brain. Isoform 2 is expressed in cells of hemopoietic lineages, especially T-lymphocytes.

It is found in the cytoplasm. The protein resides in the nucleus. It localises to the cell membrane. Its subcellular location is the perikaryon. It catalyses the reaction L-tyrosyl-[protein] + ATP = O-phospho-L-tyrosyl-[protein] + ADP + H(+). With respect to regulation, inhibited by phosphorylation of Tyr-531 by leukocyte common antigen and activated by dephosphorylation of this site. Non-receptor tyrosine-protein kinase that plays a role in many biological processes including regulation of cell growth and survival, cell adhesion, integrin-mediated signaling, cytoskeletal remodeling, cell motility, immune response and axon guidance. Inactive FYN is phosphorylated on its C-terminal tail within the catalytic domain. Following activation by PKA, the protein subsequently associates with PTK2/FAK1, allowing PTK2/FAK1 phosphorylation, activation and targeting to focal adhesions. Involved in the regulation of cell adhesion and motility through phosphorylation of CTNNB1 (beta-catenin) and CTNND1 (delta-catenin). Regulates cytoskeletal remodeling by phosphorylating several proteins including the actin regulator WAS and the microtubule-associated proteins MAP2 and MAPT. Promotes cell survival by phosphorylating AGAP2/PIKE-A and preventing its apoptotic cleavage. Participates in signal transduction pathways that regulate the integrity of the glomerular slit diaphragm (an essential part of the glomerular filter of the kidney) by phosphorylating several slit diaphragm components including NPHS1, KIRREL1 and TRPC6. Plays a role in neural processes by phosphorylating DPYSL2, a multifunctional adapter protein within the central nervous system, ARHGAP32, a regulator for Rho family GTPases implicated in various neural functions, and SNCA, a small pre-synaptic protein. Involved in reelin signaling by mediating phosphorylation of DAB1 following reelin (RELN)-binding to its receptor. Participates in the downstream signaling pathways that lead to T-cell differentiation and proliferation following T-cell receptor (TCR) stimulation. Phosphorylates PTK2B/PYK2 in response to T-cell receptor activation. Also participates in negative feedback regulation of TCR signaling through phosphorylation of PAG1, thereby promoting interaction between PAG1 and CSK and recruitment of CSK to lipid rafts. CSK maintains LCK and FYN in an inactive form. Promotes CD28-induced phosphorylation of VAV1. In mast cells, phosphorylates CLNK after activation of immunoglobulin epsilon receptor signaling. Can also promote CD244-mediated NK cell activation. This is Tyrosine-protein kinase Fyn (FYN) from Homo sapiens (Human).